The sequence spans 152 residues: 3-hydroxyacyl-[acyl-carrier-protein] dehydratase FabZ (152 aa).

The active site involves His58.

It belongs to the thioester dehydratase family. FabZ subfamily.

It localises to the cytoplasm. The catalysed reaction is a (3R)-hydroxyacyl-[ACP] = a (2E)-enoyl-[ACP] + H2O. Its function is as follows. Involved in unsaturated fatty acids biosynthesis. Catalyzes the dehydration of short chain beta-hydroxyacyl-ACPs and long chain saturated and unsaturated beta-hydroxyacyl-ACPs. This chain is 3-hydroxyacyl-[acyl-carrier-protein] dehydratase FabZ, found in Prochlorococcus marinus (strain MIT 9301).